A 57-amino-acid polypeptide reads, in one-letter code: uncharacterized protein (57 aa).

Residues 3 to 23 (PLTLLIIIGGVILGNELIISL) traverse the membrane as a helical segment. The interval 38 to 57 (KHKHKTQENYETFASDKKRT) is disordered.

The protein localises to the host membrane. This is an uncharacterized protein from Acidianus bottle-shaped virus (isolate Italy/Pozzuoli) (ABV).